Reading from the N-terminus, the 509-residue chain is UDP-N-acetylmuramoyl-L-alanyl-D-glutamate--2,6-diaminopimelate ligase (509 aa).

S32 lines the UDP-N-acetyl-alpha-D-muramoyl-L-alanyl-D-glutamate pocket. Residue G117–T123 participates in ATP binding. UDP-N-acetyl-alpha-D-muramoyl-L-alanyl-D-glutamate contacts are provided by residues T159–T160, S186, Q192, and R194. An N6-carboxylysine modification is found at K226. Residues R401, D425–R428, G476, and E480 contribute to the meso-2,6-diaminopimelate site. The short motif at D425 to R428 is the Meso-diaminopimelate recognition motif element.

This sequence belongs to the MurCDEF family. MurE subfamily. Requires Mg(2+) as cofactor. Post-translationally, carboxylation is probably crucial for Mg(2+) binding and, consequently, for the gamma-phosphate positioning of ATP.

It localises to the cytoplasm. It carries out the reaction UDP-N-acetyl-alpha-D-muramoyl-L-alanyl-D-glutamate + meso-2,6-diaminopimelate + ATP = UDP-N-acetyl-alpha-D-muramoyl-L-alanyl-gamma-D-glutamyl-meso-2,6-diaminopimelate + ADP + phosphate + H(+). Its pathway is cell wall biogenesis; peptidoglycan biosynthesis. In terms of biological role, catalyzes the addition of meso-diaminopimelic acid to the nucleotide precursor UDP-N-acetylmuramoyl-L-alanyl-D-glutamate (UMAG) in the biosynthesis of bacterial cell-wall peptidoglycan. The sequence is that of UDP-N-acetylmuramoyl-L-alanyl-D-glutamate--2,6-diaminopimelate ligase from Prochlorococcus marinus (strain NATL1A).